The following is a 232-amino-acid chain: ATP synthase subunit a (232 aa).

Transmembrane regions (helical) follow at residues 18–38, 74–94, 107–127, 142–162, 173–193, and 195–215; these read LLFI…IAFI, WAGL…LGLF, TYSL…YLAF, ALIP…PIAL, GHLL…SLMV, and SIPI…VACI.

It belongs to the ATPase A chain family. In terms of assembly, F-type ATPases have 2 components, CF(1) - the catalytic core - and CF(0) - the membrane proton channel. CF(1) has five subunits: alpha(3), beta(3), gamma(1), delta(1), epsilon(1). CF(0) has three main subunits: a, b and c.

Its subcellular location is the mitochondrion inner membrane. Mitochondrial membrane ATP synthase (F(1)F(0) ATP synthase or Complex V) produces ATP from ADP in the presence of a proton gradient across the membrane which is generated by electron transport complexes of the respiratory chain. F-type ATPases consist of two structural domains, F(1) - containing the extramembraneous catalytic core and F(0) - containing the membrane proton channel, linked together by a central stalk and a peripheral stalk. During catalysis, ATP synthesis in the catalytic domain of F(1) is coupled via a rotary mechanism of the central stalk subunits to proton translocation. Key component of the proton channel; it may play a direct role in the translocation of protons across the membrane. The sequence is that of ATP synthase subunit a (ATP6) from Paracentrotus lividus (Common sea urchin).